The following is a 425-amino-acid chain: Interferon-activable protein 211 (425 aa).

The region spanning 1–88 is the Pyrin domain; that stretch reads MVNEYKRIVL…AEILKKERSE (88 aa). Residues 86–99 show a composition bias toward basic and acidic residues; sequence RSEVTGETSLEKNG. The disordered stretch occupies residues 86–223; it reads RSEVTGETSL…QNQNIPRGAV (138 aa). The segment covering 122–153 has biased composition (low complexity); it reads TSATQEETSTAQAGTSTAQAGTSTAQAGTSTA. Tandem repeats lie at residues 129 to 135, 136 to 142, 143 to 149, and 150 to 156. Residues 129 to 177 are 4 X 7 AA tandem repeats of T-S-T-A-Q-A-[GR]; that stretch reads TSTAQAGTSTAQAGTSTAQAGTSTAQKRKSMREEETGVKKSKAAKEPDQ. Basic and acidic residues predominate over residues 159-176; sequence MREEETGVKKSKAAKEPD. Residues 190–206 show a composition bias toward low complexity; it reads SPILHSSSSASSNILSA. The span at 207 to 218 shows a compositional bias: polar residues; the sequence is KNQKSQPQNQNI. One can recognise an HIN-200 domain in the interval 213 to 413; the sequence is PQNQNIPRGA…CGDHSFVKVT (201 aa).

The protein belongs to the HIN-200 family. As to quaternary structure, interacts with HOXB2. As to expression, mononuclear phagocytes.

The protein resides in the nucleus. Its function is as follows. Inhibits cell growth via p53/TP53 and RB1-dependent and independent pathways. May work in synergy with TP53 to promote the transcription of CDKN1A/P21. In Mus musculus (Mouse), this protein is Interferon-activable protein 211.